A 96-amino-acid polypeptide reads, in one-letter code: Co-chaperonin GroES (96 aa).

This sequence belongs to the GroES chaperonin family. Heptamer of 7 subunits arranged in a ring. Interacts with the chaperonin GroEL.

The protein localises to the cytoplasm. In terms of biological role, together with the chaperonin GroEL, plays an essential role in assisting protein folding. The GroEL-GroES system forms a nano-cage that allows encapsulation of the non-native substrate proteins and provides a physical environment optimized to promote and accelerate protein folding. GroES binds to the apical surface of the GroEL ring, thereby capping the opening of the GroEL channel. This is Co-chaperonin GroES from Hahella chejuensis (strain KCTC 2396).